Here is a 190-residue protein sequence, read N- to C-terminus: Vascular endothelial growth factor A (190 aa).

The N-terminal stretch at 1-26 (MNFLLSWVHWSLALLLYLHHAKWSQA) is a signal peptide. Cystine bridges form between Cys-51–Cys-93, Cys-82–Cys-127, and Cys-86–Cys-129. A glycan (N-linked (GlcNAc...) asparagine) is linked at Asn-100.

Belongs to the PDGF/VEGF growth factor family. As to quaternary structure, homodimer; disulfide-linked. Also found as heterodimer with PGF. Interacts with NRP1. Interacts with BSG. Interacts with CD82; this interaction inhibits VEGFA-mediated signaling pathway.

The protein localises to the secreted. Functionally, growth factor active in angiogenesis, vasculogenesis and endothelial cell growth. Induces endothelial cell proliferation, promotes cell migration, inhibits apoptosis and induces permeabilization of blood vessels. Binds to the FLT1/VEGFR1 and KDR/VEGFR2 receptors, heparan sulfate and heparin. Binding to NRP1 receptor initiates a signaling pathway needed for motor neuron axon guidance and cell body migration, including for the caudal migration of facial motor neurons from rhombomere 4 to rhombomere 6 during embryonic development. Also binds the DEAR/FBXW7-AS1 receptor. The sequence is that of Vascular endothelial growth factor A (VEGFA) from Sus scrofa (Pig).